The primary structure comprises 273 residues: Thioredoxin-like 1-3, chloroplastic (273 aa).

Residues 1–44 constitute a chloroplast transit peptide; sequence MATDSFIKLNPISFNRARFDLRDFAGISPKSISSLCCISPRLIS. The Thioredoxin domain occupies 62–202; that stretch reads LFSKKKIPAF…FKEALEKHGR (141 aa). Active-site nucleophile residues include Cys-125 and Cys-128. Cys-125 and Cys-128 form a disulfide bridge.

This sequence belongs to the thioredoxin family.

Its subcellular location is the plastid. It localises to the chloroplast. In terms of biological role, probable thiol-disulfide oxidoreductase that may participate in various redox reactions. The chain is Thioredoxin-like 1-3, chloroplastic from Arabidopsis thaliana (Mouse-ear cress).